A 212-amino-acid polypeptide reads, in one-letter code: Phosphatidylserine decarboxylase proenzyme (212 aa).

Residue S182 is the Schiff-base intermediate with substrate; via pyruvic acid of the active site. The residue at position 182 (S182) is a Pyruvic acid (Ser); by autocatalysis.

This sequence belongs to the phosphatidylserine decarboxylase family. PSD-A subfamily. In terms of assembly, heterodimer of a large membrane-associated beta subunit and a small pyruvoyl-containing alpha subunit. It depends on pyruvate as a cofactor. Is synthesized initially as an inactive proenzyme. Formation of the active enzyme involves a self-maturation process in which the active site pyruvoyl group is generated from an internal serine residue via an autocatalytic post-translational modification. Two non-identical subunits are generated from the proenzyme in this reaction, and the pyruvate is formed at the N-terminus of the alpha chain, which is derived from the carboxyl end of the proenzyme. The post-translation cleavage follows an unusual pathway, termed non-hydrolytic serinolysis, in which the side chain hydroxyl group of the serine supplies its oxygen atom to form the C-terminus of the beta chain, while the remainder of the serine residue undergoes an oxidative deamination to produce ammonia and the pyruvoyl prosthetic group on the alpha chain.

It localises to the cell membrane. It carries out the reaction a 1,2-diacyl-sn-glycero-3-phospho-L-serine + H(+) = a 1,2-diacyl-sn-glycero-3-phosphoethanolamine + CO2. It participates in phospholipid metabolism; phosphatidylethanolamine biosynthesis; phosphatidylethanolamine from CDP-diacylglycerol: step 2/2. Its function is as follows. Catalyzes the formation of phosphatidylethanolamine (PtdEtn) from phosphatidylserine (PtdSer). This Chlorobium limicola (strain DSM 245 / NBRC 103803 / 6330) protein is Phosphatidylserine decarboxylase proenzyme.